The chain runs to 427 residues: Glutamate-1-semialdehyde 2,1-aminomutase (427 aa).

Lysine 265 is subject to N6-(pyridoxal phosphate)lysine.

Belongs to the class-III pyridoxal-phosphate-dependent aminotransferase family. HemL subfamily. Homodimer. It depends on pyridoxal 5'-phosphate as a cofactor.

Its subcellular location is the cytoplasm. The enzyme catalyses (S)-4-amino-5-oxopentanoate = 5-aminolevulinate. The protein operates within porphyrin-containing compound metabolism; protoporphyrin-IX biosynthesis; 5-aminolevulinate from L-glutamyl-tRNA(Glu): step 2/2. This chain is Glutamate-1-semialdehyde 2,1-aminomutase, found in Bordetella avium (strain 197N).